The following is a 413-amino-acid chain: Putative glutamate--cysteine ligase 2 (413 aa).

The interval 392-413 is disordered; the sequence is GGVCALSTPQGDPLPGWAERLH.

It belongs to the glutamate--cysteine ligase type 2 family. YbdK subfamily.

It catalyses the reaction L-cysteine + L-glutamate + ATP = gamma-L-glutamyl-L-cysteine + ADP + phosphate + H(+). ATP-dependent carboxylate-amine ligase which exhibits weak glutamate--cysteine ligase activity. The sequence is that of Putative glutamate--cysteine ligase 2 from Bordetella bronchiseptica (strain ATCC BAA-588 / NCTC 13252 / RB50) (Alcaligenes bronchisepticus).